The chain runs to 95 residues: Small ribosomal subunit protein uS19 (95 aa).

The interval 73 to 95 (EFSPTRTYRGHGADKNAKGSKKK) is disordered.

This sequence belongs to the universal ribosomal protein uS19 family.

Its function is as follows. Protein S19 forms a complex with S13 that binds strongly to the 16S ribosomal RNA. The sequence is that of Small ribosomal subunit protein uS19 from Deinococcus radiodurans (strain ATCC 13939 / DSM 20539 / JCM 16871 / CCUG 27074 / LMG 4051 / NBRC 15346 / NCIMB 9279 / VKM B-1422 / R1).